The primary structure comprises 164 residues: Peptidyl-prolyl cis-trans isomerase A-like 4D (164 aa).

The 157-residue stretch at 7-163 folds into the PPIase cyclophilin-type domain; it reads FFEITRDGKP…KKITIADCGQ (157 aa).

The protein belongs to the cyclophilin-type PPIase family. PPIase A subfamily.

The protein resides in the cytoplasm. It catalyses the reaction [protein]-peptidylproline (omega=180) = [protein]-peptidylproline (omega=0). Its function is as follows. PPIases accelerate the folding of proteins. It catalyzes the cis-trans isomerization of proline imidic peptide bonds in oligopeptides. This is Peptidyl-prolyl cis-trans isomerase A-like 4D from Homo sapiens (Human).